The following is a 234-amino-acid chain: Ribonuclease HII (234 aa).

In terms of domain architecture, RNase H type-2 spans 47–234; that stretch reads IRIAGVDEVG…KTVHKILYQE (188 aa). Residues D53, E54, and D144 each contribute to the a divalent metal cation site.

The protein belongs to the RNase HII family. Mn(2+) is required as a cofactor. Requires Mg(2+) as cofactor.

Its subcellular location is the cytoplasm. The enzyme catalyses Endonucleolytic cleavage to 5'-phosphomonoester.. Endonuclease that specifically degrades the RNA of RNA-DNA hybrids. The sequence is that of Ribonuclease HII from Ruegeria pomeroyi (strain ATCC 700808 / DSM 15171 / DSS-3) (Silicibacter pomeroyi).